The chain runs to 285 residues: Shikimate dehydrogenase (NADP(+)) (285 aa).

Shikimate-binding positions include 22 to 24 and Thr-71; that span reads SRS. Lys-75 (proton acceptor) is an active-site residue. Positions 96 and 111 each coordinate shikimate. Residues 136-140, 160-165, and Ile-225 each bind NADP(+); these read GAGGA and NRTVGR. Tyr-227 serves as a coordination point for shikimate. NADP(+) is bound at residue Gly-248.

It belongs to the shikimate dehydrogenase family. In terms of assembly, homodimer.

It catalyses the reaction shikimate + NADP(+) = 3-dehydroshikimate + NADPH + H(+). The protein operates within metabolic intermediate biosynthesis; chorismate biosynthesis; chorismate from D-erythrose 4-phosphate and phosphoenolpyruvate: step 4/7. Functionally, involved in the biosynthesis of the chorismate, which leads to the biosynthesis of aromatic amino acids. Catalyzes the reversible NADPH linked reduction of 3-dehydroshikimate (DHSA) to yield shikimate (SA). In Rhizobium etli (strain CIAT 652), this protein is Shikimate dehydrogenase (NADP(+)).